Consider the following 197-residue polypeptide: MTPPGRLYLPLLLGLLLAPPPPGAQGLPGAEFPPSAARNAQQRLQKHFGHSTLKPAAHLVGDPSAQDSLRWRANTDRAFLRHGFSLSNNSLLVPSSGLYFVYSQVVFSGEGCSPKAVPTPLYLAHEVQLFSSQYSFHVPLLSAQKSVCPGPQGPWVRSVYQGAVFLLTQGDQLSTHTDGIAHLLLSPSSVFFGAFAL.

An N-terminal signal peptide occupies residues 1-26 (MTPPGRLYLPLLLGLLLAPPPPGAQG). Residues 55 to 197 (PAAHLVGDPS…SSVFFGAFAL (143 aa)) enclose the THD domain. Residue asparagine 88 is glycosylated (N-linked (GlcNAc...) asparagine). An intrachain disulfide couples cysteine 112 to cysteine 148.

It belongs to the tumor necrosis factor family. As to quaternary structure, homotrimer, and heterotrimer of either two LTB and one LTA subunits or (less prevalent) two LTA and one LTB subunits. Interacts with TNFRSF14.

The protein resides in the secreted. It is found in the membrane. Its function is as follows. Cytokine that in its homotrimeric form binds to TNFRSF1A/TNFR1, TNFRSF1B/TNFBR and TNFRSF14/HVEM. In its heterotrimeric form with LTB binds to TNFRSF3/LTBR. Lymphotoxin is produced by lymphocytes and is cytotoxic for a wide range of tumor cells in vitro and in vivo. The polypeptide is Lymphotoxin-alpha (LTA) (Oryctolagus cuniculus (Rabbit)).